The primary structure comprises 647 residues: MFQDNPLLAQLKEKLHSQTPRVEGVVKGTEKGFGFLEVDAQKSYFIPPPFMKKVMHGDRVSAVIQSDKDREVADPETLIEPFLTRFVGRVQKKDDRLSIIPDHPLLKDAIQCRPERSVKHDFQAGDWAVAEMRRHPLKGDRTFYAELTEFITTAEDHLAPWWVTLSRHNLEREAPDVTTPQSMLDEQLEREDLTSLPFVTIDSASTEDMDDALYVEDAGNGALKLIVAIADPTAYVPVGSKLDAVAAERAFTNYLPGFNIPMLPRQLSDDICSLRPHERRPVLACRITLAADGTPADDVQFFAAWIESHAKLAYNDVSDWLETGGSSAWQPENEAIANQIRLLNRLCLARSEWRQAHALVFKDRPDFRFLLGEKGEVLDIIAEHRRIANRIVEESMILANICAATVLRDRLGFGIYNVHLGFDEANAEQAAAVLANHGVTADPLAIATLEGFRNLRRELDALPTQFLDSRIRRFQSFAEVSTTPGPHFGLGLEAYATWTSPIRKYGDMVNHRLLKAIIKGEQSARPADELSLKMAERRRQNRMAERDVGDWLYSRFLQKAAGSEQRFSAEVIDVSRGGMRVRLQENGAVAFIPAPFIHAVRDEMVCSNENGSVQIKGEVAYRVTDLIEVTIAEVRMETRSIVARPVA.

Positions 190 to 519 constitute an RNB domain; the sequence is REDLTSLPFV…NHRLLKAIIK (330 aa). In terms of domain architecture, S1 motif spans 564 to 646; the sequence is EQRFSAEVID…ETRSIVARPV (83 aa).

Belongs to the RNR ribonuclease family. RNase II subfamily.

It localises to the cytoplasm. It carries out the reaction Exonucleolytic cleavage in the 3'- to 5'-direction to yield nucleoside 5'-phosphates.. In terms of biological role, involved in mRNA degradation. Hydrolyzes single-stranded polyribonucleotides processively in the 3' to 5' direction. The protein is Exoribonuclease 2 of Erwinia tasmaniensis (strain DSM 17950 / CFBP 7177 / CIP 109463 / NCPPB 4357 / Et1/99).